A 1358-amino-acid polypeptide reads, in one-letter code: Insulin-like growth factor 1 receptor (1358 aa).

Residues 1–25 (MKAELVPVCTAWILGLLLCLGPAAA) form the signal peptide. A disulfide bond links C28 and C47. 3 N-linked (GlcNAc...) asparagine glycosylation sites follow: N74, N99, and N132. Disulfide bonds link C147/C175, C179/C202, C189/C208, C212/C221, C216/C227, C228/C236, C232/C245, C248/C257, C261/C273, C279/C299, C303/C317, C320/C324, and C328/C347. N-linked (GlcNAc...) asparagine glycosylation is present at N241. N310 is a glycosylation site (N-linked (GlcNAc...) asparagine). N-linked (GlcNAc...) asparagine glycans are attached at residues N411 and N432. A disulfide bridge connects residues C449 and C482. 4 Fibronectin type-III domains span residues 483 to 603 (ESHV…TDAA), 604 to 702 (VPSI…TEAE), 727 to 818 (PRPN…FVFA), and 829 to 924 (IPGI…LKPD). N488, N528, N616, N634, and N669 each carry an N-linked (GlcNAc...) asparagine glycan. Residues 670-691 (GTIDTEGGTEPTKPEGSVGEKG) form a disordered region. The Extracellular segment spans residues 735–934 (DVLAVGNSTV…VRNNILQMVV (200 aa)). 5 N-linked (GlcNAc...) asparagine glycosylation sites follow: N741, N750, N758, N895, and N908. The chain crosses the membrane as a helical span at residues 935–955 (AIPLALSFLLVGIISIVCFVF). Topologically, residues 956-1358 (KKRNSNRLGN…ALPLPQSSAC (403 aa)) are cytoplasmic. The residue at position 976 (Y976) is a Phosphotyrosine; by autocatalysis. Residues 995–1270 (ITMNRELGQG…SIKDELDPGF (276 aa)) enclose the Protein kinase domain. ATP contacts are provided by residues 1001–1009 (LGQGSFGMV) and K1029. D1131 (proton acceptor) is an active-site residue. Phosphotyrosine; by autocatalysis occurs at positions 1157, 1161, and 1162. The disordered stretch occupies residues 1336–1358 (PYAHMNGGRKNERALPLPQSSAC).

This sequence belongs to the protein kinase superfamily. Tyr protein kinase family. Insulin receptor subfamily. As to quaternary structure, tetramer of 2 alpha and 2 beta chains linked by disulfide bonds. The alpha chains contribute to the formation of the ligand-binding domain, while the beta chain carries the kinase domain. Mn(2+) serves as cofactor. The cytoplasmic domain of the beta subunit is autophosphorylated on Tyr residues in response to low concentrations of insulin-like growth factor (IGF1) and higher concentrations of insulin.

Its subcellular location is the cell membrane. It catalyses the reaction L-tyrosyl-[protein] + ATP = O-phospho-L-tyrosyl-[protein] + ADP + H(+). Its activity is regulated as follows. Autophosphorylation activates the kinase activity. This receptor binds insulin-like growth factor 1 (IGF1) with a high affinity and IGF2 with a lower affinity. It has a tyrosine-protein kinase activity, which is necessary for the activation of the IGF1-stimulated downstream signaling cascade. Plays a role in oocyte maturation. Promotes head development by inhibiting Wnt signaling during embryogenesis. This Xenopus laevis (African clawed frog) protein is Insulin-like growth factor 1 receptor (igf1r).